A 142-amino-acid chain; its full sequence is Transcription antitermination protein NusB (142 aa).

This sequence belongs to the NusB family.

Functionally, involved in transcription antitermination. Required for transcription of ribosomal RNA (rRNA) genes. Binds specifically to the boxA antiterminator sequence of the ribosomal RNA (rrn) operons. The protein is Transcription antitermination protein NusB of Buchnera aphidicola subsp. Cinara cedri (strain Cc).